The primary structure comprises 2473 residues: Neurogenic locus notch homolog protein 2 (2473 aa).

The N-terminal stretch at 1-25 is a signal peptide; the sequence is MPALRPAALRALLWLWLCGAGPAHA. 4 EGF-like domains span residues 26–63, 64–102, 105–143, and 144–180; these read LQCR…EYCQ, HRDP…EDCQ, TSHP…KQCQ, and WTDA…QKCE. Over 26–1679 the chain is Extracellular; it reads LQCRGGQEPC…SELESPRNAQ (1654 aa). Disulfide bonds link Cys28–Cys41, Cys35–Cys51, Cys53–Cys62, Cys68–Cys79, Cys73–Cys90, Cys92–Cys101, Cys109–Cys121, Cys115–Cys131, Cys133–Cys142, Cys148–Cys159, Cys153–Cys168, Cys170–Cys179, Cys186–Cys198, Cys192–Cys207, Cys209–Cys218, Cys230–Cys246, Cys248–Cys257, Cys264–Cys275, Cys269–Cys284, Cys286–Cys295, Cys302–Cys315, Cys309–Cys324, Cys326–Cys335, Cys342–Cys353, Cys347–Cys362, Cys364–Cys373, Cys379–Cys390, Cys384–Cys401, Cys403–Cys412, Cys419–Cys433, Cys427–Cys442, Cys444–Cys453, Cys460–Cys471, Cys465–Cys480, Cys482–Cys491, Cys498–Cys509, Cys503–Cys518, Cys520–Cys529, Cys536–Cys547, Cys541–Cys556, Cys558–Cys567, Cys574–Cys584, Cys579–Cys593, Cys595–Cys604, Cys611–Cys622, Cys616–Cys631, Cys633–Cys642, Cys649–Cys659, Cys654–Cys668, Cys670–Cys679, Cys686–Cys697, Cys691–Cys706, Cys708–Cys717, Cys724–Cys734, Cys729–Cys743, Cys745–Cys754, Cys761–Cys772, Cys766–Cys781, Cys783–Cys792, Cys799–Cys810, Cys804–Cys819, Cys821–Cys830, Cys837–Cys848, Cys842–Cys859, Cys861–Cys870, Cys877–Cys888, Cys882–Cys897, Cys899–Cys908, Cys915–Cys926, Cys920–Cys935, Cys937–Cys946, Cys953–Cys964, Cys958–Cys973, Cys975–Cys984, Cys991–Cys1002, Cys996–Cys1011, Cys1013–Cys1022, Cys1029–Cys1040, Cys1034–Cys1049, Cys1051–Cys1060, Cys1067–Cys1078, Cys1072–Cys1087, and Cys1089–Cys1098. The N-linked (GlcNAc...) asparagine glycan is linked to Asn46. N-linked (GlcNAc...) asparagine glycosylation occurs at Asn155. The EGF-like 5; calcium-binding domain occupies 182-219; it reads DINECDIPGRCQHGGTCLNLPGSYRCQCPQGFTGQHCD. The EGF-like 6; incomplete domain maps to 221-258; it reads PYVPCAPSPCVNGGTCRQTGDFTFECNCLPGFEGSTCE. Residues 260–296 form the EGF-like 7; calcium-binding domain; that stretch reads NIDDCPNHKCQNGGVCVDGVNTYNCRCPPQWTGQFCT. The EGF-like 8; calcium-binding domain maps to 298-336; sequence DVDECLLQPNACQNGGTCTNRNGGYGCVCVNGWSGDDCS. In terms of domain architecture, EGF-like 9; calcium-binding spans 338 to 374; sequence NIDDCAYASCTPGSTCIDRVASFSCLCPEGKAGLLCH. An EGF-like 10 domain is found at 375 to 413; that stretch reads LDDACISNPCHKGALCDTNPLNGQYICTCPQGYKGADCT. The EGF-like 11; calcium-binding domain maps to 415–454; that stretch reads DVDECAMANSNPCEHAGKCVNTDGAFHCECLKGYAGPRCE. The EGF-like 12; calcium-binding domain occupies 456-492; the sequence is DINECHSDPCQNDATCLDKIGGFTCLCMPGFKGVHCE. The EGF-like 13; calcium-binding domain maps to 494–530; it reads EVNECQSNPCVNNGQCVDKVNRFQCLCPPGFTGPVCQ. An EGF-like 14; calcium-binding domain is found at 532 to 568; the sequence is DIDDCSSTPCLNGAKCIDHPNGYECQCATGFTGILCD. An EGF-like 15; calcium-binding domain is found at 570-605; sequence NIDNCDPDPCHHGQCQDGIDSYTCICNPGYMGAICS. The region spanning 607–643 is the EGF-like 16; calcium-binding domain; that stretch reads QIDECYSSPCLNDGRCIDLVNGYQCNCQPGTSGLNCE. Ser613 carries an O-linked (Glc...) serine; alternate glycan. Ser613 carries an O-linked (Xyl...) serine; alternate glycan. The 36-residue stretch at 645-680 folds into the EGF-like 17; calcium-binding domain; it reads NFDDCASNPCMHGVCVDGINRYSCVCSPGFTGQRCN. The EGF-like 18; calcium-binding domain maps to 682–718; that stretch reads DIDECASNPCRKGATCINDVNGFRCICPEGPHHPSCY. In terms of domain architecture, EGF-like 19 spans 720–755; it reads QVNECLSNPCIHGNCTGGLSGYKCLCDAGWVGVNCE. Asn733 carries an N-linked (GlcNAc...) asparagine glycan. Residues 757–793 form the EGF-like 20; calcium-binding domain; it reads DKNECLSNPCQNGGTCNNLVNGYRCTCKKGFKGYNCQ. Residues 795-831 form the EGF-like 21; calcium-binding domain; the sequence is NIDECASNPCLNQGTCFDDVSGYTCHCMLPYTGKNCQ. An EGF-like 22 domain is found at 833 to 871; that stretch reads VLAPCSPNPCENAAVCKEAPNFESFSCLCAPGWQGKRCT. Residues 873 to 909 form the EGF-like 23; calcium-binding domain; sequence DVDECISKPCMNNGVCHNTQGSYVCECPPGFSGMDCE. Residues 911–947 form the EGF-like 24; calcium-binding domain; it reads DINDCLANPCQNGGSCVDHVNTFSCQCHPGFIGDKCQ. In terms of domain architecture, EGF-like 25; calcium-binding spans 949–985; that stretch reads DMNECLSEPCKNGGTCSDYVNSYTCTCPAGFHGVHCE. Residues 987–1023 enclose the EGF-like 26; calcium-binding domain; the sequence is NIDECTESSCFNGGTCVDGINSFSCLCPVGFTGPFCL. One can recognise an EGF-like 27; calcium-binding domain in the interval 1025–1061; sequence DINECSSNPCLNAGTCVDGLGTYRCICPLGYTGKNCQ. EGF-like domains lie at 1063 to 1099 and 1101 to 1147; these read LVNL…AYCD and LNVS…SYCE. An N-linked (GlcNAc...) asparagine glycan is attached at Asn1102. Intrachain disulfides connect Cys1105–Cys1126, Cys1120–Cys1135, Cys1137–Cys1146, Cys1153–Cys1164, Cys1158–Cys1173, Cys1175–Cys1184, Cys1191–Cys1202, Cys1196–Cys1211, Cys1213–Cys1222, Cys1229–Cys1241, Cys1235–Cys1250, Cys1252–Cys1261, Cys1268–Cys1281, Cys1273–Cys1290, Cys1292–Cys1301, Cys1308–Cys1319, Cys1313–Cys1331, Cys1333–Cys1346, Cys1378–Cys1389, Cys1383–Cys1400, Cys1402–Cys1411, Cys1425–Cys1448, Cys1430–Cys1443, and Cys1439–Cys1455. An EGF-like 30; calcium-binding domain is found at 1149-1185; sequence QLDECASNPCQHGATCNDFIGGYRCECVPGYQGVNCE. The region spanning 1187 to 1223 is the EGF-like 31; calcium-binding domain; it reads EVDECQNQPCQNGGTCIDLVNHFKCSCPPGTRGLLCE. One can recognise an EGF-like 32; calcium-binding domain in the interval 1225–1262; it reads NIDECAGGPHCLNGGQCVDRIGGYTCRCLPGFAGERCE. EGF-like domains follow at residues 1264-1302, 1304-1343, and 1375-1412; these read DINE…RHCE, FLDV…ARCQ, and ESGC…SHCE. LNR repeat units follow at residues 1425 to 1465, 1466 to 1502, and 1503 to 1544; these read CQSQ…PWAN, CTST…NSKT, and CKYD…NLAE. The negative regulatory region (NRR) stretch occupies residues 1425–1679; it reads CQSQYCADKA…SELESPRNAQ (255 aa). N-linked (GlcNAc...) asparagine glycosylation is present at Asn1465. 7 cysteine pairs are disulfide-bonded: Cys1466–Cys1489, Cys1472–Cys1484, Cys1480–Cys1496, Cys1503–Cys1527, Cys1509–Cys1522, Cys1518–Cys1534, and Cys1634–Cys1641. Residues 1680–1700 traverse the membrane as a helical segment; that stretch reads LLYLLAVAVVIILFFILLGVI. The Cytoplasmic portion of the chain corresponds to 1701–2473; the sequence is MAKRKRKHGF…PPHSNMQVYA (773 aa). At Thr1718 the chain carries Phosphothreonine. The tract at residues 1755–1778 is disordered; it reads GTSEHWVDDEGPQPKKAKAEDEAL. Ser1780 carries the phosphoserine modification. Residue Thr1803 is modified to Phosphothreonine. At Ser1805 the chain carries Phosphoserine. Thr1809 bears the Phosphothreonine mark. ANK repeat units follow at residues 1828–1872, 1877–1906, 1910–1940, 1944–1973, 1977–2006, and 2010–2039; these read DGCT…SLQA, TGEM…DANA, MGRC…DLDA, DGTT…DVNA, HGKS…NRDM, and KEET…NRDI. Phosphoserine is present on residues Ser1843 and Ser1846. Ser2071, Ser2079, and Ser2082 each carry phosphoserine. Thr2098 is modified (phosphothreonine). Disordered regions lie at residues 2098 to 2117, 2122 to 2169, and 2382 to 2473; these read TPMG…PTSL, KEAK…TSSP, and VGKY…QVYA. Residues 2099–2108 are compositionally biased toward basic residues; it reads PMGKKARRPN. Polar residues-rich tracts occupy residues 2140–2151 and 2390–2400; these read VQLSESSVTLSP and SQHSYASSNAA. The span at 2419–2446 shows a compositional bias: low complexity; that stretch reads PSPESPDQWSSSSPHSASDWSDVTTSPT. The segment covering 2447–2456 has biased composition (gly residues); the sequence is PGGGGGGQRG.

This sequence belongs to the NOTCH family. In terms of assembly, heterodimer of a C-terminal fragment N(TM) and an N-terminal fragment N(EC) which are probably linked by disulfide bonds. Interacts with MAML1, MAML2 and MAML3 which act as transcriptional coactivators for NOTCH2. Interacts with RELA/p65. Interacts with HIF1AN. Interacts (via ANK repeats) with TCIM, the interaction inhibits the nuclear translocation of NOTCH2 N2ICD. Interacts with CUL1, RBX1, SKP1 and FBXW7 that are SCF(FBXW7) E3 ubiquitin-protein ligase complex components. Interacts with MINAR1; this interaction increases MINAR1 stability and function. Interacts with MDK; this interaction mediates a nuclear accumulation of NOTCH2 and therefore activation of NOTCH2 signaling leading to interaction between HES1 and STAT3. Interacts with MINAR2. In terms of processing, synthesized in the endoplasmic reticulum as an inactive form which is proteolytically cleaved by a furin-like convertase in the trans-Golgi network before it reaches the plasma membrane to yield an active, ligand-accessible form. Cleavage results in a C-terminal fragment N(TM) and a N-terminal fragment N(EC). Following ligand binding, it is cleaved by TNF-alpha converting enzyme (TACE) to yield a membrane-associated intermediate fragment called notch extracellular truncation (NEXT). This fragment is then cleaved by presenilin dependent gamma-secretase to release a notch-derived peptide containing the intracellular domain (NICD) from the membrane. Post-translationally, hydroxylated by HIF1AN. Can be either O-glucosylated or O-xylosylated at Ser-613 by POGLUT1. In terms of processing, phosphorylated by GSK3. GSK3-mediated phosphorylation is necessary for NOTCH2 recognition by FBXW7, ubiquitination and degradation via the ubiquitin proteasome pathway. Expressed in the brain, liver, kidney, neuroepithelia, somites, optic vesicles and branchial arches, but not heart.

The protein localises to the cell membrane. It localises to the nucleus. The protein resides in the cytoplasm. Functionally, functions as a receptor for membrane-bound ligands Jagged-1 (JAG1), Jagged-2 (JAG2) and Delta-1 (DLL1) to regulate cell-fate determination. Upon ligand activation through the released notch intracellular domain (NICD) it forms a transcriptional activator complex with RBPJ/RBPSUH and activates genes of the enhancer of split locus. Affects the implementation of differentiation, proliferation and apoptotic programs. May play an essential role in postimplantation development, probably in some aspect of cell specification and/or differentiation. In collaboration with RELA/p65 enhances NFATc1 promoter activity and positively regulates RANKL-induced osteoclast differentiation. Positively regulates self-renewal of liver cancer cells. The chain is Neurogenic locus notch homolog protein 2 from Mus musculus (Mouse).